The primary structure comprises 446 residues: UDP-N-acetylglucosamine--dolichyl-phosphate N-acetylglucosaminephosphotransferase (446 aa).

A run of 2 helical transmembrane segments spans residues 1 to 21 (MIESCFNVGIWATGLALLMNQ) and 25 to 45 (PLLSNVGLSVLAYKATAMFIP). Residues 59–61 (KDM) and Glu-71 each bind UDP-N-acetyl-alpha-D-glucosamine. A run of 2 helical transmembrane segments spans residues 73–93 (MGAVSALVYFMCMIIFIPVLF) and 123–143 (LLGAYLSALLSILSVSLLGIL). Lys-154 is a binding site for dolichyl phosphate. 2 consecutive transmembrane segments (helical) span residues 155–175 (FFLPAIAAIPLLVVYYVDYGV) and 191–211 (SLINLGFLYYFYMAAVAIFCP). 208 to 216 (IFCPNSINI) is a dolichyl phosphate binding site. Asn-215 lines the Mg(2+) pocket. Transmembrane regions (helical) follow at residues 216-236 (IIAGVNGVEAGQSLVLALVIA), 254-274 (AHLLSLYLVLPLIGVTAGLLK), 282-302 (VFVGDTFCYFAGMVMAVVGIL), and 311-331 (LFFIPQIFNFALSVPQLFGLV). Residue Asn-221 participates in UDP-N-acetyl-alpha-D-glucosamine binding. Asp-286 provides a ligand contact to Mg(2+). 335–337 (RHR) lines the UDP-N-acetyl-alpha-D-glucosamine pocket. Residue Asn-395 is glycosylated (N-linked (GlcNAc...) asparagine). Residues 412–432 (DHLTICIMGLQLLTGIFGLII) traverse the membrane as a helical segment.

It belongs to the glycosyltransferase 4 family. Mg(2+) is required as a cofactor.

It localises to the endoplasmic reticulum membrane. The enzyme catalyses a di-trans,poly-cis-dolichyl phosphate + UDP-N-acetyl-alpha-D-glucosamine = an N-acetyl-alpha-D-glucosaminyl-diphospho-di-trans,poly-cis-dolichol + UMP. The protein operates within protein modification; protein glycosylation. Inhibited by natural nucleoside antibiotic tunicamycin, which acts as a structural analog and competitor of UDP-GlcNAc. UDP-N-acetylglucosamine--dolichyl-phosphate N-acetylglucosaminephosphotransferase that operates in the biosynthetic pathway of dolichol-linked oligosaccharides, the glycan precursors employed in protein asparagine (N)-glycosylation. The assembly of dolichol-linked oligosaccharides begins on the cytosolic side of the endoplasmic reticulum membrane and finishes in its lumen. The sequential addition of sugars to dolichol pyrophosphate produces dolichol-linked oligosaccharides containing fourteen sugars, including two GlcNAcs, nine mannoses and three glucoses. Once assembled, the oligosaccharide is transferred from the lipid to nascent proteins by oligosaccharyltransferases. Catalyzes the initial step of dolichol-linked oligosaccharide biosynthesis, transfering GlcNAc-1-P from cytosolic UDP-GlcNAc onto the carrier lipid dolichyl phosphate (P-dolichol), yielding GlcNAc-P-P-dolichol embedded in the cytoplasmic leaflet of the endoplasmic reticulum membrane. This Schizosaccharomyces pombe (strain 972 / ATCC 24843) (Fission yeast) protein is UDP-N-acetylglucosamine--dolichyl-phosphate N-acetylglucosaminephosphotransferase (gpt2).